The sequence spans 109 residues: Hainantoxin-XVIII-7 (109 aa).

The signal sequence occupies residues 1–18 (MKLSIIIIATSLVIAVVA). The propeptide occupies 19-46 (FPSKDSKAIENDKTEQRMEIVVQETARA). Intrachain disulfides connect Cys-47–Cys-62, Cys-55–Cys-68, Cys-59–Cys-108, and Cys-61–Cys-81.

The protein belongs to the neurotoxin 25 family. F7 subfamily. Expressed by the venom gland.

The protein resides in the secreted. Functionally, putative ion channel inhibitor. This Cyriopagopus hainanus (Chinese bird spider) protein is Hainantoxin-XVIII-7.